Consider the following 295-residue polypeptide: 4-hydroxy-tetrahydrodipicolinate synthase 1 (295 aa).

Thr-46 serves as a coordination point for pyruvate. Tyr-134 acts as the Proton donor/acceptor in catalysis. Catalysis depends on Lys-162, which acts as the Schiff-base intermediate with substrate. Val-204 contacts pyruvate.

Belongs to the DapA family. As to quaternary structure, homotetramer; dimer of dimers.

It localises to the cytoplasm. The enzyme catalyses L-aspartate 4-semialdehyde + pyruvate = (2S,4S)-4-hydroxy-2,3,4,5-tetrahydrodipicolinate + H2O + H(+). Its pathway is amino-acid biosynthesis; L-lysine biosynthesis via DAP pathway; (S)-tetrahydrodipicolinate from L-aspartate: step 3/4. Catalyzes the condensation of (S)-aspartate-beta-semialdehyde [(S)-ASA] and pyruvate to 4-hydroxy-tetrahydrodipicolinate (HTPA). The polypeptide is 4-hydroxy-tetrahydrodipicolinate synthase 1 (Halalkalibacterium halodurans (strain ATCC BAA-125 / DSM 18197 / FERM 7344 / JCM 9153 / C-125) (Bacillus halodurans)).